The primary structure comprises 472 residues: Argininosuccinate lyase (472 aa).

It belongs to the lyase 1 family. Argininosuccinate lyase subfamily.

It localises to the cytoplasm. It catalyses the reaction 2-(N(omega)-L-arginino)succinate = fumarate + L-arginine. Its pathway is amino-acid biosynthesis; L-arginine biosynthesis; L-arginine from L-ornithine and carbamoyl phosphate: step 3/3. In Mycobacterium avium (strain 104), this protein is Argininosuccinate lyase.